Here is a 178-residue protein sequence, read N- to C-terminus: ATP synthase subunit delta (178 aa).

It belongs to the ATPase delta chain family. In terms of assembly, F-type ATPases have 2 components, F(1) - the catalytic core - and F(0) - the membrane proton channel. F(1) has five subunits: alpha(3), beta(3), gamma(1), delta(1), epsilon(1). F(0) has three main subunits: a(1), b(2) and c(10-14). The alpha and beta chains form an alternating ring which encloses part of the gamma chain. F(1) is attached to F(0) by a central stalk formed by the gamma and epsilon chains, while a peripheral stalk is formed by the delta and b chains.

It is found in the cell membrane. Functionally, f(1)F(0) ATP synthase produces ATP from ADP in the presence of a proton or sodium gradient. F-type ATPases consist of two structural domains, F(1) containing the extramembraneous catalytic core and F(0) containing the membrane proton channel, linked together by a central stalk and a peripheral stalk. During catalysis, ATP synthesis in the catalytic domain of F(1) is coupled via a rotary mechanism of the central stalk subunits to proton translocation. Its function is as follows. This protein is part of the stalk that links CF(0) to CF(1). It either transmits conformational changes from CF(0) to CF(1) or is implicated in proton conduction. This Streptococcus thermophilus (strain ATCC BAA-250 / LMG 18311) protein is ATP synthase subunit delta.